Here is a 237-residue protein sequence, read N- to C-terminus: Small ribosomal subunit protein uS2 (237 aa).

The protein belongs to the universal ribosomal protein uS2 family.

The sequence is that of Small ribosomal subunit protein uS2 from Clostridioides difficile (strain 630) (Peptoclostridium difficile).